The sequence spans 292 residues: ATP synthase gamma chain (292 aa).

It belongs to the ATPase gamma chain family. As to quaternary structure, F-type ATPases have 2 components, CF(1) - the catalytic core - and CF(0) - the membrane proton channel. CF(1) has five subunits: alpha(3), beta(3), gamma(1), delta(1), epsilon(1). CF(0) has three main subunits: a, b and c.

The protein resides in the cell membrane. In terms of biological role, produces ATP from ADP in the presence of a proton gradient across the membrane. The gamma chain is believed to be important in regulating ATPase activity and the flow of protons through the CF(0) complex. The chain is ATP synthase gamma chain from Prosthecochloris aestuarii (strain DSM 271 / SK 413).